The following is a 382-amino-acid chain: Succinyl-diaminopimelate desuccinylase (382 aa).

H73 is a Zn(2+) binding site. D75 is an active-site residue. D106 provides a ligand contact to Zn(2+). The Proton acceptor role is filled by E140. Zn(2+) contacts are provided by E141, E169, and H355.

The protein belongs to the peptidase M20A family. DapE subfamily. As to quaternary structure, homodimer. It depends on Zn(2+) as a cofactor. The cofactor is Co(2+).

It carries out the reaction N-succinyl-(2S,6S)-2,6-diaminopimelate + H2O = (2S,6S)-2,6-diaminopimelate + succinate. It functions in the pathway amino-acid biosynthesis; L-lysine biosynthesis via DAP pathway; LL-2,6-diaminopimelate from (S)-tetrahydrodipicolinate (succinylase route): step 3/3. Its function is as follows. Catalyzes the hydrolysis of N-succinyl-L,L-diaminopimelic acid (SDAP), forming succinate and LL-2,6-diaminopimelate (DAP), an intermediate involved in the bacterial biosynthesis of lysine and meso-diaminopimelic acid, an essential component of bacterial cell walls. This is Succinyl-diaminopimelate desuccinylase from Leptothrix cholodnii (strain ATCC 51168 / LMG 8142 / SP-6) (Leptothrix discophora (strain SP-6)).